The chain runs to 822 residues: Valine--tRNA ligase (822 aa).

The 'HIGH' region signature appears at 41-51 (PNVTGQLHLGH). The 'KMSKS' region signature appears at 511-515 (KMSKS). Lys514 is an ATP binding site. Positions 765 to 822 (EQKGRELKEIQFLKSEILRAEKILTNKGFLEKAPREKIDLERTKLEKLKEKLAFYEKK) form a coiled coil.

It belongs to the class-I aminoacyl-tRNA synthetase family. ValS type 1 subfamily. Monomer.

It is found in the cytoplasm. It catalyses the reaction tRNA(Val) + L-valine + ATP = L-valyl-tRNA(Val) + AMP + diphosphate. Functionally, catalyzes the attachment of valine to tRNA(Val). As ValRS can inadvertently accommodate and process structurally similar amino acids such as threonine, to avoid such errors, it has a 'posttransfer' editing activity that hydrolyzes mischarged Thr-tRNA(Val) in a tRNA-dependent manner. The polypeptide is Valine--tRNA ligase (Mesomycoplasma hyopneumoniae (strain 7448) (Mycoplasma hyopneumoniae)).